The sequence spans 234 residues: Peptidase E (234 aa).

Residues S123, D138, and H160 each act as charge relay system in the active site.

The protein belongs to the peptidase S51 family.

Its subcellular location is the cytoplasm. It carries out the reaction Dipeptidase E catalyzes the hydrolysis of dipeptides Asp-|-Xaa. It does not act on peptides with N-terminal Glu, Asn or Gln, nor does it cleave isoaspartyl peptides.. Hydrolyzes dipeptides containing N-terminal aspartate residues. May play a role in allowing the cell to use peptide aspartate to spare carbon otherwise required for the synthesis of the aspartate family of amino acids. The protein is Peptidase E of Actinobacillus pleuropneumoniae serotype 3 (strain JL03).